The chain runs to 106 residues: Nucleoid-associated protein Abu_0429 (106 aa).

It belongs to the YbaB/EbfC family. As to quaternary structure, homodimer.

It is found in the cytoplasm. The protein resides in the nucleoid. Binds to DNA and alters its conformation. May be involved in regulation of gene expression, nucleoid organization and DNA protection. In Aliarcobacter butzleri (strain RM4018) (Arcobacter butzleri), this protein is Nucleoid-associated protein Abu_0429.